A 662-amino-acid chain; its full sequence is Phosphomethylpyrimidine synthase (662 aa).

Residues Asn235, Met264, Tyr293, His329, 349-351 (SRG), 390-393 (DGMR), and Glu429 contribute to the substrate site. His433 contributes to the Zn(2+) binding site. Position 456 (Tyr456) interacts with substrate. Residue His497 coordinates Zn(2+). Positions 577, 580, and 585 each coordinate [4Fe-4S] cluster.

It belongs to the ThiC family. Homodimer. Requires [4Fe-4S] cluster as cofactor.

The catalysed reaction is 5-amino-1-(5-phospho-beta-D-ribosyl)imidazole + S-adenosyl-L-methionine = 4-amino-2-methyl-5-(phosphooxymethyl)pyrimidine + CO + 5'-deoxyadenosine + formate + L-methionine + 3 H(+). The protein operates within cofactor biosynthesis; thiamine diphosphate biosynthesis. In terms of biological role, catalyzes the synthesis of the hydroxymethylpyrimidine phosphate (HMP-P) moiety of thiamine from aminoimidazole ribotide (AIR) in a radical S-adenosyl-L-methionine (SAM)-dependent reaction. This chain is Phosphomethylpyrimidine synthase, found in Shewanella halifaxensis (strain HAW-EB4).